The following is a 43-amino-acid chain: Large ribosomal subunit protein uL5 (43 aa).

This sequence belongs to the universal ribosomal protein uL5 family. As to quaternary structure, part of the 50S ribosomal subunit; part of the 5S rRNA/L5/L18/L25 subcomplex. Contacts the 5S rRNA and the P site tRNA. Forms a bridge to the 30S subunit in the 70S ribosome.

In terms of biological role, this is one of the proteins that bind and probably mediate the attachment of the 5S RNA into the large ribosomal subunit, where it forms part of the central protuberance. In the 70S ribosome it contacts protein S13 of the 30S subunit (bridge B1b), connecting the 2 subunits; this bridge is implicated in subunit movement. Contacts the P site tRNA; the 5S rRNA and some of its associated proteins might help stabilize positioning of ribosome-bound tRNAs. This is Large ribosomal subunit protein uL5 (rplE) from Proteus vulgaris.